We begin with the raw amino-acid sequence, 191 residues long: NF-kappa-B inhibitor-interacting Ras-like protein 2 (191 aa).

Residues M1–G191 form a small GTPase-like region. GTP is bound at residue G11–T18. Positions M35–Y43 match the Effector region motif. GTP contacts are provided by residues D61 to L65 and N120 to D123. The tract at residues T169–G191 is disordered.

Belongs to the small GTPase superfamily. Ras family. KappaB-Ras subfamily. In terms of assembly, interacts with both NF-kappa-B inhibitor alpha (NFKBIA) and beta (NFKBIB) in vitro. However, it probably only interacts with NFKBIB in vivo. Interacts with GFOD1. In terms of tissue distribution, widely expressed.

It is found in the cytoplasm. Functionally, atypical Ras-like protein that acts as a potent regulator of NF-kappa-B activity by preventing the degradation of NF-kappa-B inhibitor beta (NFKBIB) by most signals, explaining why NFKBIB is more resistant to degradation. May act by blocking phosphorylation of NFKBIB and nuclear localization of p65/RELA NF-kappa-B subunit. It is unclear whether it acts as a GTPase. Both GTP- and GDP-bound forms block phosphorylation of NFKBIB. In Homo sapiens (Human), this protein is NF-kappa-B inhibitor-interacting Ras-like protein 2 (NKIRAS2).